We begin with the raw amino-acid sequence, 150 residues long: SsrA-binding protein (150 aa).

The interval 127-150 (KRETEKQRDWQREKARIMKGDAKD) is disordered.

Belongs to the SmpB family.

Its subcellular location is the cytoplasm. Its function is as follows. Required for rescue of stalled ribosomes mediated by trans-translation. Binds to transfer-messenger RNA (tmRNA), required for stable association of tmRNA with ribosomes. tmRNA and SmpB together mimic tRNA shape, replacing the anticodon stem-loop with SmpB. tmRNA is encoded by the ssrA gene; the 2 termini fold to resemble tRNA(Ala) and it encodes a 'tag peptide', a short internal open reading frame. During trans-translation Ala-aminoacylated tmRNA acts like a tRNA, entering the A-site of stalled ribosomes, displacing the stalled mRNA. The ribosome then switches to translate the ORF on the tmRNA; the nascent peptide is terminated with the 'tag peptide' encoded by the tmRNA and targeted for degradation. The ribosome is freed to recommence translation, which seems to be the essential function of trans-translation. In Cupriavidus necator (strain ATCC 17699 / DSM 428 / KCTC 22496 / NCIMB 10442 / H16 / Stanier 337) (Ralstonia eutropha), this protein is SsrA-binding protein.